Reading from the N-terminus, the 468-residue chain is MSNVKSSKPVFPENAGSNEYAASLDAADPLASFRDKFIIPSKANINSKKLAKPGLSSDPCIYFCGNSLGIQPKATAKYLEAQLDTWSSIGVSGHFVDLEGSPLKQWQLLSEQAAASMSKIVGAQAEEVAAMGTLTANLHLLLASFYKPTPTKHKILLDWKAFPSDHYAIESHLAWHNLDPKQSMVLIGPDEGEYEISTEKILSYIDEHAESAALILLPGIQYYTGQLFDIQKITAYAQSRDLTVGWDLAHAYGNVELKLHDWDVDFAAWCTYKYGNAGPGAMGGLFVHERHGRVDYSEGEDAPKFRHRLTGWYGGDRSVRFKMDNNFKPIPGAGGWQLSNPSAIDLACLCASLSVFDETSMAELRKKSVMLTAYLEHLLLKDTTDETRPFRIVTPADPEARGAQLSVLLKPGLLQNVSQKLQEGGIVCDKREPGVVRVAPTPLYNTFTDVWKFVSYFKAALDEPELKN.

Pyridoxal 5'-phosphate-binding positions include Leu-134, Thr-135, 162–165, Asp-247, His-250, and Tyr-272; that span reads FPSD. The residue at position 273 (Lys-273) is an N6-(pyridoxal phosphate)lysine. Trp-312 and Asn-340 together coordinate pyridoxal 5'-phosphate.

The protein belongs to the kynureninase family. In terms of assembly, homodimer. It depends on pyridoxal 5'-phosphate as a cofactor.

The protein resides in the cytoplasm. It catalyses the reaction L-kynurenine + H2O = anthranilate + L-alanine + H(+). It carries out the reaction 3-hydroxy-L-kynurenine + H2O = 3-hydroxyanthranilate + L-alanine + H(+). It functions in the pathway amino-acid degradation; L-kynurenine degradation; L-alanine and anthranilate from L-kynurenine: step 1/1. Its pathway is cofactor biosynthesis; NAD(+) biosynthesis; quinolinate from L-kynurenine: step 2/3. Functionally, catalyzes the cleavage of L-kynurenine (L-Kyn) and L-3-hydroxykynurenine (L-3OHKyn) into anthranilic acid (AA) and 3-hydroxyanthranilic acid (3-OHAA), respectively. This chain is Kynureninase 2 (bna5-2), found in Aspergillus oryzae (strain ATCC 42149 / RIB 40) (Yellow koji mold).